The sequence spans 294 residues: Homeobox-leucine zipper protein ATHB-13 (294 aa).

Positions 82–141 (MGEKKRRLNMEQVKTLEKNFELGNKLEPERKMQLARALGLQPRQIAIWFQNRRARWKTKQ) form a DNA-binding region, homeobox. The tract at residues 142-177 (LEKDYDTLKRQFDTLKAENDLLQTHNQKLQAEIMGL) is leucine-zipper. The tract at residues 181-246 (EQTESINLNK…FFPPSPATAT (66 aa)) is disordered. Low complexity predominate over residues 197 to 210 (SNRSDNSSDNLRLD). Polar residues predominate over residues 214–223 (APPSNDSTLT).

This sequence belongs to the HD-ZIP homeobox family. Class I subfamily. Predominantly expressed in leaves and flowers.

The protein resides in the nucleus. Probable transcription factor that may act in the sucrose-signaling pathway. This Arabidopsis thaliana (Mouse-ear cress) protein is Homeobox-leucine zipper protein ATHB-13 (ATHB-13).